Reading from the N-terminus, the 528-residue chain is MPLTLGQSLFANFLGNSPRWYKFAILSFLAINPILFYLNPFIAGWVLVIQFIFTLAMALKCYPLQPGGLLAIEAVIIGMTSPTQVLHEIQANLEVLLLLVFMVAGIYFMKQLLLYAFTKMLTKVRSKIVVSMLFCIASAFLSAFLDALTVIAVIITVAVGFYSIYHKVASGKDFSSDHDHTSEAPEQLNESELESFRGFLRNLLMHAGVGTALGGVCTMVGEPQNLIIAAQANWQFGEFAIRMSPVTVPVFFAGILTCFIVEKFKWFGYGAKLPEAVHKILSEYDAYEDARRTPKDKVKLIVQALVGVWLIVGLAFHLASVGLIGLSVIILNTAFNGITDEHALGKAFEEALPFTALLAVFFAVVGVIIDQQLFAPVIQWALSYEGNVQLVIFYIANGLLSMVSDNVFVGTVYINEVKAALLNGQITRDQFDLLAVAINTGTNLPSVATPNGQAAFLFLLTSALAPLIRLSYGRMVMMALPYTIVLSIVGILAIESGFLTDMTQYFYDSHLINHHTAAEAAGKALGGH.

The next 11 helical transmembrane spans lie at 23–45 (FAILSFLAINPILFYLNPFIAGW), 66–86 (PGGLLAIEAVIIGMTSPTQVL), 95–115 (VLLLLVFMVAGIYFMKQLLLY), 130–164 (VSMLFCIASAFLSAFLDALTVIAVIITVAVGFYSI), 203–223 (LLMHAGVGTALGGVCTMVGEP), 241–261 (IRMSPVTVPVFFAGILTCFIV), 310–330 (LIVGLAFHLASVGLIGLSVII), 349–369 (EEALPFTALLAVFFAVVGVII), 390–410 (LVIFYIANGLLSMVSDNVFVG), 448–468 (ATPNGQAAFLFLLTSALAPLI), and 475–495 (MVMMALPYTIVLSIVGILAIE).

It belongs to the NhaB Na(+)/H(+) (TC 2.A.34) antiporter family.

The protein localises to the cell inner membrane. The catalysed reaction is 2 Na(+)(in) + 3 H(+)(out) = 2 Na(+)(out) + 3 H(+)(in). In terms of biological role, na(+)/H(+) antiporter that extrudes sodium in exchange for external protons. This chain is Na(+)/H(+) antiporter NhaB, found in Shewanella amazonensis (strain ATCC BAA-1098 / SB2B).